The sequence spans 226 residues: Glutathione S-transferase kappa 1 (226 aa).

16 to 18 provides a ligand contact to glutathione; it reads SPY. Lysine 49 bears the N6-succinyllysine mark. Residue asparagine 53 coordinates glutathione. Residues lysine 71 and lysine 85 each carry the N6-acetyllysine modification. Lysine 116 carries the post-translational modification N6-acetyllysine; alternate. Lysine 116 carries the N6-succinyllysine; alternate modification. N6-succinyllysine is present on lysine 144. Lysine 158 is subject to N6-acetyllysine; alternate. At lysine 158 the chain carries N6-succinyllysine; alternate. Residues lysine 165 and lysine 169 each carry the N6-acetyllysine modification. Glutathione is bound by residues leucine 183 and 200–201; that span reads SD.

The protein belongs to the GST superfamily. Kappa family. Homodimer. Ubiquitous.

Its subcellular location is the peroxisome. The enzyme catalyses RX + glutathione = an S-substituted glutathione + a halide anion + H(+). Glutathione S-transferase that catalyzes the conjugation of glutathione to exogenous and endogenous compounds. Significant glutathione conjugating activity is found only with the model substrate, 1-chloro-2,4-dinitrobenzene (CDNB). The chain is Glutathione S-transferase kappa 1 (GSTK1) from Homo sapiens (Human).